The sequence spans 502 residues: Sulfate adenylyltransferase (502 aa).

An N-terminal region spans residues 1 to 167 (MPSPHGGVLQ…LEAIQLPVHY (167 aa)). A catalytic region spans residues 168-393 (DYPGWRKTPA…LRESNPSRPK (226 aa)). A sulfate-binding site is contributed by glutamine 195. ATP-binding positions include 195–198 (QTRN) and 289–292 (GRDH). Active-site residues include threonine 196, arginine 197, and asparagine 198. Residue arginine 197 participates in sulfate binding. Sulfate is bound at residue alanine 293. ATP is bound at residue valine 331. Residues 394–502 (QGFALVLSET…FLEDQGFFQF (109 aa)) are required for oligomerization; adenylyl-sulfate kinase-like.

The protein belongs to the sulfate adenylyltransferase family. In terms of assembly, homohexamer. Dimer of trimers.

The protein localises to the cytoplasm. It catalyses the reaction sulfate + ATP + H(+) = adenosine 5'-phosphosulfate + diphosphate. It functions in the pathway sulfur metabolism; hydrogen sulfide biosynthesis; sulfite from sulfate: step 1/3. Functionally, catalyzes the first intracellular reaction of sulfate assimilation, forming adenosine-5'-phosphosulfate (APS) from inorganic sulfate and ATP. Plays an important role in sulfate activation as a component of the biosynthesis pathway of sulfur-containing amino acids. This chain is Sulfate adenylyltransferase, found in Kluyveromyces lactis (strain ATCC 8585 / CBS 2359 / DSM 70799 / NBRC 1267 / NRRL Y-1140 / WM37) (Yeast).